Consider the following 450-residue polypeptide: tRNA modification GTPase MnmE (450 aa).

The (6S)-5-formyl-5,6,7,8-tetrahydrofolate site is built by arginine 23, glutamate 79, and lysine 118. The region spanning 214–374 is the TrmE-type G domain; it reads GITLILVGKP…LKEHILNKVG (161 aa). Asparagine 224 is a binding site for K(+). GTP-binding positions include 224–229, 243–249, and 268–271; these read NAGKSS, TSIAGTT, and DTAG. Mg(2+) is bound at residue serine 228. Positions 243, 245, and 248 each coordinate K(+). Threonine 249 contributes to the Mg(2+) binding site. Lysine 450 is a (6S)-5-formyl-5,6,7,8-tetrahydrofolate binding site.

This sequence belongs to the TRAFAC class TrmE-Era-EngA-EngB-Septin-like GTPase superfamily. TrmE GTPase family. Homodimer. Heterotetramer of two MnmE and two MnmG subunits. K(+) serves as cofactor.

Its subcellular location is the cytoplasm. In terms of biological role, exhibits a very high intrinsic GTPase hydrolysis rate. Involved in the addition of a carboxymethylaminomethyl (cmnm) group at the wobble position (U34) of certain tRNAs, forming tRNA-cmnm(5)s(2)U34. The protein is tRNA modification GTPase MnmE of Francisella tularensis subsp. holarctica (strain OSU18).